The sequence spans 175 residues: Adenine phosphoribosyltransferase (175 aa).

It belongs to the purine/pyrimidine phosphoribosyltransferase family. In terms of assembly, homodimer.

The protein resides in the cytoplasm. It catalyses the reaction AMP + diphosphate = 5-phospho-alpha-D-ribose 1-diphosphate + adenine. It functions in the pathway purine metabolism; AMP biosynthesis via salvage pathway; AMP from adenine: step 1/1. In terms of biological role, catalyzes a salvage reaction resulting in the formation of AMP, that is energically less costly than de novo synthesis. The sequence is that of Adenine phosphoribosyltransferase from Maricaulis maris (strain MCS10) (Caulobacter maris).